The following is a 144-amino-acid chain: Protein NrdI (144 aa).

Belongs to the NrdI family.

Probably involved in ribonucleotide reductase function. The sequence is that of Protein NrdI from Streptococcus pyogenes serotype M4 (strain MGAS10750).